A 203-amino-acid chain; its full sequence is Histidine biosynthesis bifunctional protein HisIE (203 aa).

The segment at 1 to 108 is phosphoribosyl-AMP cyclohydrolase; that stretch reads MELDFDKMNG…GEKNEEPVMF (108 aa). Residues 109-203 form a phosphoribosyl-ATP pyrophosphohydrolase region; it reads LKALQDFIDK…ERHSSTWKKH (95 aa).

In the N-terminal section; belongs to the PRA-CH family. It in the C-terminal section; belongs to the PRA-PH family.

It is found in the cytoplasm. The enzyme catalyses 1-(5-phospho-beta-D-ribosyl)-ATP + H2O = 1-(5-phospho-beta-D-ribosyl)-5'-AMP + diphosphate + H(+). It catalyses the reaction 1-(5-phospho-beta-D-ribosyl)-5'-AMP + H2O = 1-(5-phospho-beta-D-ribosyl)-5-[(5-phospho-beta-D-ribosylamino)methylideneamino]imidazole-4-carboxamide. It functions in the pathway amino-acid biosynthesis; L-histidine biosynthesis; L-histidine from 5-phospho-alpha-D-ribose 1-diphosphate: step 2/9. It participates in amino-acid biosynthesis; L-histidine biosynthesis; L-histidine from 5-phospho-alpha-D-ribose 1-diphosphate: step 3/9. The sequence is that of Histidine biosynthesis bifunctional protein HisIE from Bacteroides thetaiotaomicron (strain ATCC 29148 / DSM 2079 / JCM 5827 / CCUG 10774 / NCTC 10582 / VPI-5482 / E50).